Consider the following 290-residue polypeptide: Light-independent protochlorophyllide reductase iron-sulfur ATP-binding protein (290 aa).

ATP contacts are provided by residues 10–15 and Lys-39; that span reads GIGKST. Residue Ser-14 coordinates Mg(2+). Cys-95 and Cys-129 together coordinate [4Fe-4S] cluster. 180 to 181 is a binding site for ATP; it reads NR.

Belongs to the NifH/BchL/ChlL family. As to quaternary structure, homodimer. Protochlorophyllide reductase is composed of three subunits; ChlL, ChlN and ChlB. It depends on [4Fe-4S] cluster as a cofactor.

It localises to the plastid. It is found in the chloroplast. The enzyme catalyses chlorophyllide a + oxidized 2[4Fe-4S]-[ferredoxin] + 2 ADP + 2 phosphate = protochlorophyllide a + reduced 2[4Fe-4S]-[ferredoxin] + 2 ATP + 2 H2O. It functions in the pathway porphyrin-containing compound metabolism; chlorophyll biosynthesis (light-independent). Its function is as follows. Component of the dark-operative protochlorophyllide reductase (DPOR) that uses Mg-ATP and reduced ferredoxin to reduce ring D of protochlorophyllide (Pchlide) to form chlorophyllide a (Chlide). This reaction is light-independent. The L component serves as a unique electron donor to the NB-component of the complex, and binds Mg-ATP. The polypeptide is Light-independent protochlorophyllide reductase iron-sulfur ATP-binding protein (Anthoceros angustus (Hornwort)).